The following is a 350-amino-acid chain: tRNA uridine(34) hydroxylase (350 aa).

In terms of domain architecture, Rhodanese spans 146-240; sequence DDPDALFIDM…YARKAREQGL (95 aa). Catalysis depends on C200, which acts as the Cysteine persulfide intermediate.

The protein belongs to the TrhO family.

It carries out the reaction uridine(34) in tRNA + AH2 + O2 = 5-hydroxyuridine(34) in tRNA + A + H2O. Catalyzes oxygen-dependent 5-hydroxyuridine (ho5U) modification at position 34 in tRNAs, the first step in 5-carboxymethoxyuridine (cmo5U) biosynthesis. May be part of an alternate pathway, which is able to bypass cmo5U biogenesis in a subset of tRNAs under aerobic conditions. This is tRNA uridine(34) hydroxylase from Escherichia coli (strain K12).